The following is a 349-amino-acid chain: Draxin (349 aa).

An N-terminal signal peptide occupies residues 1–25; the sequence is MAASSTFFSPSLFLCVLVLIDITLA. A compositionally biased stretch (polar residues) spans 40–53; it reads NHLQNQETWPQQPR. Disordered stretches follow at residues 40 to 63, 119 to 166, and 246 to 273; these read NHLQNQETWPQQPRSGHHHKHGLA, PHAE…LYKK, and WPSAKKKEKRRSKSSNGGNETSSAEGEP. Over residues 54 to 63 the composition is skewed to basic residues; sequence SGHHHKHGLA. Over residues 119–139 the composition is skewed to basic and acidic residues; sequence PHAERENQSPGSERGKKQNRE. 2 stretches are compositionally biased toward basic residues: residues 140–155 and 249–258; these read QRRHSRRDRLKHHRGK and AKKKEKRRSK. A glycan (N-linked (GlcNAc...) asparagine) is linked at N264.

Belongs to the draxin family.

The protein localises to the secreted. Functionally, chemorepulsive axon guidance protein required for the development of spinal cord and forebrain commissures. Acts as a chemorepulsive guidance protein for commissural axons during development. Able to inhibit or repel neurite outgrowth from dorsal spinal cord and cortical explants in vitro. Binds directly to the neurites and growth cones. In Gallus gallus (Chicken), this protein is Draxin.